Here is a 408-residue protein sequence, read N- to C-terminus: Na(+)-translocating NADH-quinone reductase subunit F (408 aa).

The chain crosses the membrane as a helical span at residues 4-24 (IYLGVGMFTIIVLVLVAIIMF). A 2Fe-2S ferredoxin-type domain is found at 33 to 127 (GDVEILINDD…DMEIELPEEV (95 aa)). The [2Fe-2S] cluster site is built by C70, C76, C79, and C111. The 141-residue stretch at 130–270 (IRKWDCTVKS…SGPFGEFFAK (141 aa)) folds into the FAD-binding FR-type domain.

Belongs to the NqrF family. Composed of six subunits; NqrA, NqrB, NqrC, NqrD, NqrE and NqrF. [2Fe-2S] cluster serves as cofactor. The cofactor is FAD.

It localises to the cell inner membrane. The catalysed reaction is a ubiquinone + n Na(+)(in) + NADH + H(+) = a ubiquinol + n Na(+)(out) + NAD(+). In terms of biological role, NQR complex catalyzes the reduction of ubiquinone-1 to ubiquinol by two successive reactions, coupled with the transport of Na(+) ions from the cytoplasm to the periplasm. The first step is catalyzed by NqrF, which accepts electrons from NADH and reduces ubiquinone-1 to ubisemiquinone by a one-electron transfer pathway. This chain is Na(+)-translocating NADH-quinone reductase subunit F, found in Idiomarina loihiensis (strain ATCC BAA-735 / DSM 15497 / L2-TR).